Here is a 954-residue protein sequence, read N- to C-terminus: Leucine--tRNA ligase (954 aa).

The 'HIGH' region motif lies at 40 to 51; that stretch reads PYPSGAGLHVGH. A 'KMSKS' region motif is present at residues 729–733; sequence KMSKS. K732 contributes to the ATP binding site.

This sequence belongs to the class-I aminoacyl-tRNA synthetase family.

It is found in the cytoplasm. It catalyses the reaction tRNA(Leu) + L-leucine + ATP = L-leucyl-tRNA(Leu) + AMP + diphosphate. This is Leucine--tRNA ligase from Flavobacterium johnsoniae (strain ATCC 17061 / DSM 2064 / JCM 8514 / BCRC 14874 / CCUG 350202 / NBRC 14942 / NCIMB 11054 / UW101) (Cytophaga johnsonae).